The chain runs to 465 residues: Phospholipase A1-II 5 (465 aa).

Ser-233 acts as the Acyl-ester intermediate in catalysis. Catalysis depends on charge relay system residues Ser-233, Asp-297, and His-336.

The protein belongs to the AB hydrolase superfamily. Lipase family.

The protein localises to the cytoplasm. Acylhydrolase that catalyzes the hydrolysis of phospholipids at the sn-1 position. The polypeptide is Phospholipase A1-II 5 (Oryza sativa subsp. japonica (Rice)).